The following is a 1245-amino-acid chain: Structural polyprotein (1245 aa).

The disordered stretch occupies residues Met-1–Met-106. The tract at residues Gly-37–Arg-70 is host transcription inhibition. Residues Leu-38–Val-49 show a composition bias toward polar residues. Positions Pro-63–Pro-100 match the Nuclear localization signal motif. Basic residues predominate over residues Pro-67–Met-106. A binding to the viral RNA region spans residues Lys-86–Leu-115. A ribosome-binding region spans residues Pro-100–Arg-114. The region spanning Arg-114 to Trp-264 is the Peptidase S3 domain. Catalysis depends on His-141, which acts as the Charge relay system. The short motif at Ile-146 to Phe-156 is the Nuclear export signal element. Positions Thr-157–Tyr-162 are interaction with spike glycoprotein E2. Asp-163 serves as the catalytic Charge relay system. The segment at Pro-185–Ala-195 is dimerization of the capsid protein. The Charge relay system role is filled by Ser-215. Residues Asp-221–Arg-225 are dimerization of the capsid protein. The interaction with spike glycoprotein E2 stretch occupies residues Ser-249 to Thr-253. The interval Ser-265–Val-279 is functions as an uncleaved signal peptide for the precursor of protein E3/E2. Asn-278 is a glycosylation site (N-linked (GlcNAc...) asparagine; by host). 4 cysteine pairs are disulfide-bonded: Cys-283–Cys-289, Cys-480–Cys-594, Cys-529–Cys-554, and Cys-531–Cys-548. At Ser-329–Arg-690 the chain is on the extracellular side. N-linked (GlcNAc...) asparagine; by host glycosylation occurs at Asn-524. Asn-646 is a glycosylation site (N-linked (GlcNAc...) asparagine; by host). The chain crosses the membrane as a helical span at residues His-691–Cys-718. An interaction with the capsid protein region spans residues Lys-719–Glu-723. Topologically, residues Lys-719 to Ala-751 are cytoplasmic. 3 S-palmitoyl cysteine; by host lipidation sites follow: Cys-724, Cys-744, and Cys-745. An intrachain disulfide couples Cys-724 to Cys-745. Over Glu-752–Ser-763 the chain is Extracellular. Residues Asn-764–Met-784 form a helical membrane-spanning segment. Residue Arg-785 is a topological domain, cytoplasmic. Residues Cys-786 to Ala-806 traverse the membrane as a helical segment. The Extracellular segment spans residues Tyr-807–Ser-1214. Cystine bridges form between Cys-855-Cys-920, Cys-868-Cys-900, Cys-869-Cys-902, and Cys-874-Cys-884. The E1 fusion peptide loop stretch occupies residues Val-890–Ser-907. N-linked (GlcNAc...) asparagine; by host glycans are attached at residues Asn-945 and Asn-1051. 4 disulfides stabilise this stretch: Cys-1065-Cys-1077, Cys-1107-Cys-1182, Cys-1112-Cys-1186, and Cys-1134-Cys-1176. The chain crosses the membrane as a helical span at residues Trp-1215–Met-1239. Over Leu-1240–Arg-1245 the chain is Cytoplasmic.

As to quaternary structure, homodimer. Homomultimer. Interacts with host karyopherin KPNA4; this interaction allows the nuclear import of the viral capsid protein. Interacts with spike glycoprotein E2. Interacts with host IRAK1; the interaction leads to inhibition of IRAK1-dependent signaling. In terms of assembly, the precursor of protein E3/E2 and E1 form a heterodimer shortly after synthesis. The precursor of protein E3/E2 and E1 form a heterodimer shortly after synthesis. Processing of the precursor of protein E3/E2 into E2 and E3 results in a heterodimer of the spike glycoproteins E2 and E1. Spike at virion surface are constituted of a trimer of E2-E1 heterodimers. After target cell attachment and endocytosis, E1 change conformation to form homotrimers. E2-E1 heterodimers interact with host VLDLR or LRP8/APOER2 to mediate viral entry. Interacts with 6K protein. As to quaternary structure, processing of the precursor of protein E3/E2 into E2 and E3 results in a heterodimer of the spike glycoproteins E2 and E1. Spike at virion surface are constituted of a trimer of E2-E1 heterodimers. E2-E1 heterodimers interact with host VLDLR or LRP8/APOER2 to mediate viral entry. Interacts with 6K protein. Interacts with the capsid protein. In terms of assembly, oligomer. Interacts with spike glycoprotein E1. Interacts with spike glycoprotein E2. Post-translationally, structural polyprotein: Specific enzymatic cleavages in vivo yield mature proteins. Capsid protein is auto-cleaved during polyprotein translation, unmasking a signal peptide at the N-terminus of the precursor of E3/E2. The remaining polyprotein is then targeted to the host endoplasmic reticulum, where host signal peptidase cleaves it into pE2, 6K and E1 proteins. pE2 is further processed to mature E3 and E2 by host furin in trans-Golgi vesicle. Palmitoylated via thioester bonds. These palmitoylations may induce disruption of the C-terminus transmembrane. This would result in the reorientation of E2 C-terminus from lumenal to cytoplasmic side. In terms of processing, N-glycosylated. Post-translationally, palmitoylated via thioester bonds.

Its subcellular location is the virion. The protein localises to the host cytoplasm. It localises to the host cell membrane. It is found in the host nucleus. The protein resides in the virion membrane. Its subcellular location is the host Golgi apparatus. The protein localises to the host trans-Golgi network. It localises to the host endoplasmic reticulum. It catalyses the reaction Autocatalytic release of the core protein from the N-terminus of the togavirus structural polyprotein by hydrolysis of a -Trp-|-Ser- bond.. Forms an icosahedral capsid with a T=4 symmetry composed of 240 copies of the capsid protein surrounded by a lipid membrane through which penetrate 80 spikes composed of trimers of E1-E2 heterodimers. The capsid protein binds to the viral RNA genome at a site adjacent to a ribosome binding site for viral genome translation following genome release. Possesses a protease activity that results in its autocatalytic cleavage from the nascent structural protein. Following its self-cleavage, the capsid protein transiently associates with ribosomes, and within several minutes the protein binds to viral RNA and rapidly assembles into icosahedric core particles. The resulting nucleocapsid eventually associates with the cytoplasmic domain of the spike glycoprotein E2 at the cell membrane, leading to budding and formation of mature virions. In case of infection, new virions attach to target cells and after clathrin-mediated endocytosis their membrane fuses with the host endosomal membrane. This leads to the release of the nucleocapsid into the cytoplasm, followed by an uncoating event necessary for the genomic RNA to become accessible. The uncoating might be triggered by the interaction of capsid proteins with ribosomes. Binding of ribosomes would release the genomic RNA since the same region is genomic RNA-binding and ribosome-binding. Specifically inhibits interleukin-1 receptor-associated kinase 1/IRAK1-dependent signaling during viral entry, representing a means by which the alphaviruses may evade innate immune detection and activation prior to viral gene expression. Its function is as follows. Provides the signal sequence for the translocation of the precursor of protein E3/E2 to the host endoplasmic reticulum. Furin-cleaved E3 remains associated with spike glycoprotein E1 and mediates pH protection of the latter during the transport via the secretory pathway. After virion release from the host cell, the assembly protein E3 is gradually released in the extracellular space. Functionally, plays a role in viral attachment to target host cell, by binding to the cell receptors VLDLR or LRP8/APOER2. Synthesized as a pE2 precursor which is processed by furin at the cell membrane just before virion budding, giving rise to E2-E1 heterodimer. The pE2-E1 heterodimer is stable, whereas E2-E1 is unstable and dissociate at low pH. pE2 is processed at the last step, presumably to avoid E1 fusion activation before its final export to cell surface. E2 C-terminus contains a transitory transmembrane that would be disrupted by palmitoylation, resulting in reorientation of the C-terminal tail from lumenal to cytoplasmic side. This step is critical since E2 C-terminus is involved in budding by interacting with capsid proteins. This release of E2 C-terminus in cytoplasm occurs lately in protein export, and precludes premature assembly of particles at the endoplasmic reticulum membrane. In terms of biological role, acts as a viroporin that participates in virus glycoprotein processing and transport to the plasma membrane, cell permeabilization and budding of viral particles. Disrupts the calcium homeostasis of the cell, probably at the endoplasmic reticulum level resulting in the increased levels of cytoplasmic calcium. Because of its lipophilic properties, the 6K protein is postulated to influence the selection of lipids that interact with the transmembrane domains of the glycoproteins, which, in turn, affects the deformability of the bilayer required for the extreme curvature that occurs as budding proceeds. Present in low amount in virions, about 3% compared to viral glycoproteins. Class II viral fusion protein. Fusion activity is inactive as long as E1 is bound to E2 in mature virion. After virus attachment to target cell via host VLDLR or LRP8/APOER2 and endocytosis, acidification of the endosome induces dissociation of E1/E2 heterodimer and concomitant trimerization of the E1 subunits. This E1 trimer is fusion active, and promotes release of viral nucleocapsid in cytoplasm after endosome and viral membrane fusion. Efficient fusion requires the presence of cholesterol and sphingolipid in the target membrane. This chain is Structural polyprotein, found in Acrocephalus scirpaceus (Eurasian reed-warbler).